Here is a 43-residue protein sequence, read N- to C-terminus: uncharacterized protein (43 aa).

Residues 1 to 43 form a disordered region; that stretch reads MFKSRIETGGFQFQVHGDDESAMDDEFIDDDDDQQVVEPVTDN. Acidic residues predominate over residues 20–35; the sequence is ESAMDDEFIDDDDDQQ.

This is an uncharacterized protein from Dictyostelium discoideum (Social amoeba).